The sequence spans 684 residues: Methionine--tRNA ligase (684 aa).

A 'HIGH' region motif is present at residues 17-27 (PYANGKAHVGH). Zn(2+) is bound by residues Cys148, Cys151, Cys160, and Cys164. Residues 330-334 (TFSKS) carry the 'KMSKS' region motif. Lys333 is an ATP binding site. The region spanning 582–684 (DFSKLDIRIG…KETNPGTCIH (103 aa)) is the tRNA-binding domain.

This sequence belongs to the class-I aminoacyl-tRNA synthetase family. MetG type 1 subfamily. In terms of assembly, homodimer. The cofactor is Zn(2+).

The protein resides in the cytoplasm. It catalyses the reaction tRNA(Met) + L-methionine + ATP = L-methionyl-tRNA(Met) + AMP + diphosphate. Its function is as follows. Is required not only for elongation of protein synthesis but also for the initiation of all mRNA translation through initiator tRNA(fMet) aminoacylation. In Methanococcoides burtonii (strain DSM 6242 / NBRC 107633 / OCM 468 / ACE-M), this protein is Methionine--tRNA ligase.